The sequence spans 337 residues: DNA-directed RNA polymerase subunit alpha (337 aa).

The segment at 1 to 233 (MIQKNWQELI…DQLSIFVNFE (233 aa)) is alpha N-terminal domain (alpha-NTD). Residues 249–337 (FNPALLKKVD…DLAKRYEDQY (89 aa)) form an alpha C-terminal domain (alpha-CTD) region.

It belongs to the RNA polymerase alpha chain family. As to quaternary structure, homodimer. The RNAP catalytic core consists of 2 alpha, 1 beta, 1 beta' and 1 omega subunit. When a sigma factor is associated with the core the holoenzyme is formed, which can initiate transcription.

It carries out the reaction RNA(n) + a ribonucleoside 5'-triphosphate = RNA(n+1) + diphosphate. In terms of biological role, DNA-dependent RNA polymerase catalyzes the transcription of DNA into RNA using the four ribonucleoside triphosphates as substrates. The protein is DNA-directed RNA polymerase subunit alpha of Brucella melitensis biotype 2 (strain ATCC 23457).